We begin with the raw amino-acid sequence, 587 residues long: Tectonic-1 (587 aa).

The first 22 residues, 1–22 (MRPRGLPPLLVVLLGCWASVSA), serve as a signal peptide directing secretion. A glycan (N-linked (GlcNAc...) asparagine) is linked at N36. Residues 46–68 (GTFPSTRPPGTPRAPGPSSGPRP) form a disordered region. Positions 51 to 68 (TRPPGTPRAPGPSSGPRP) are enriched in pro residues. N-linked (GlcNAc...) asparagine glycosylation is found at N295 and N528.

This sequence belongs to the tectonic family. Part of the tectonic-like complex (also named B9 complex).

It localises to the cytoplasm. Its subcellular location is the cytoskeleton. The protein resides in the cilium basal body. The protein localises to the secreted. In terms of biological role, component of the tectonic-like complex, a complex localized at the transition zone of primary cilia and acting as a barrier that prevents diffusion of transmembrane proteins between the cilia and plasma membranes. Regulator of Hedgehog (Hh), required for both activation and inhibition of the Hh pathway in the patterning of the neural tube. During neural tube development, it is required for formation of the most ventral cell types and for full Hh pathway activation. Functions in Hh signal transduction to fully activate the pathway in the presence of high Hh levels and to repress the pathway in the absence of Hh signals. Modulates Hh signal transduction downstream of SMO and RAB23. In Homo sapiens (Human), this protein is Tectonic-1 (TCTN1).